A 166-amino-acid polypeptide reads, in one-letter code: Ubiquitin-conjugating enzyme E2 13 (166 aa).

The region spanning 4-164 (QACLLLQKQL…VSRCVRKSQE (161 aa)) is the UBC core domain. Cys-89 (glycyl thioester intermediate) is an active-site residue.

The protein belongs to the ubiquitin-conjugating enzyme family.

It catalyses the reaction S-ubiquitinyl-[E1 ubiquitin-activating enzyme]-L-cysteine + [E2 ubiquitin-conjugating enzyme]-L-cysteine = [E1 ubiquitin-activating enzyme]-L-cysteine + S-ubiquitinyl-[E2 ubiquitin-conjugating enzyme]-L-cysteine.. The protein operates within protein modification; protein ubiquitination. In terms of biological role, accepts the ubiquitin from the E1 complex and catalyzes its covalent attachment to other proteins. Involved in the formation of multiubiquitin chains. Signal the protein for selective degradation. The protein is Ubiquitin-conjugating enzyme E2 13 (UBC13) of Arabidopsis thaliana (Mouse-ear cress).